A 320-amino-acid chain; its full sequence is Cytochrome c biogenesis protein CcsA (320 aa).

A run of 8 helical transmembrane segments spans residues 14–34 (SFFL…YINI), 37–57 (ITIL…TFLL), 68–88 (LSNL…IHLI), 97–117 (WLGI…TLSL), 143–163 (MMLS…ILII), 228–248 (VISL…VWAN), 263–283 (WALI…IKGW), and 289–309 (AIIA…VNLL).

The protein belongs to the CcmF/CycK/Ccl1/NrfE/CcsA family. As to quaternary structure, may interact with Ccs1.

The protein resides in the plastid. Its subcellular location is the chloroplast thylakoid membrane. In terms of biological role, required during biogenesis of c-type cytochromes (cytochrome c6 and cytochrome f) at the step of heme attachment. This Marchantia polymorpha (Common liverwort) protein is Cytochrome c biogenesis protein CcsA.